The following is a 101-amino-acid chain: Small ribosomal subunit protein bS18c (101 aa).

Residues 1–19 show a composition bias toward basic residues; it reads MNKSKRPFTKSKRSFRRRL. Positions 1–20 are disordered; it reads MNKSKRPFTKSKRSFRRRLP.

Belongs to the bacterial ribosomal protein bS18 family. In terms of assembly, part of the 30S ribosomal subunit.

Its subcellular location is the plastid. It is found in the chloroplast. The polypeptide is Small ribosomal subunit protein bS18c (Arabis hirsuta (Hairy rock-cress)).